Consider the following 320-residue polypeptide: Malate dehydrogenase (320 aa).

Residues 10–15 (GAGMIG) and D34 each bind NAD(+). Substrate contacts are provided by R83 and R89. NAD(+) contacts are provided by residues N96 and 119 to 121 (ITN). Substrate is bound by residues N121 and R152. Catalysis depends on H176, which acts as the Proton acceptor.

Belongs to the LDH/MDH superfamily. MDH type 3 family.

The enzyme catalyses (S)-malate + NAD(+) = oxaloacetate + NADH + H(+). Functionally, catalyzes the reversible oxidation of malate to oxaloacetate. The chain is Malate dehydrogenase from Caulobacter sp. (strain K31).